Reading from the N-terminus, the 213-residue chain is V-type proton ATPase subunit c'' (213 aa).

At 1-14 (MNKESKDDDMSLGK) the chain is on the vacuolar side. The helical transmembrane segment at 15–35 (FSFSHFLYYLVLIVVIVYGLY) threads the bilayer. Residues 36 to 61 (KLFTGHGSDINFGKFLLRTSPYMWAN) are Cytoplasmic-facing. The chain crosses the membrane as a helical span at residues 62 to 82 (LGIALCVGLSVVGAAWGIFIT). The Vacuolar segment spans residues 83–100 (GSSMIGAGVRAPRITTKN). The helical transmembrane segment at 101 to 121 (LISIIFCEVVAIYGLIIAIVF) threads the bilayer. Topologically, residues 122 to 144 (SSKLTVATAENMYSKSNLYTGYS) are cytoplasmic. A helical membrane pass occupies residues 145–165 (LFWAGITVGASNLICGIAVGI). Over 166-183 (TGATAAISDAADSALFVK) the chain is Vacuolar. A helical membrane pass occupies residues 184–204 (ILVIEIFGSILGLLGLIVGLL). Over 205 to 213 (MAGKASEFQ) the chain is Cytoplasmic.

It belongs to the V-ATPase proteolipid subunit family. In terms of assembly, V-ATPase is a heteromultimeric enzyme composed of a peripheral catalytic V1 complex (components A to H) attached to an integral membrane V0 proton pore complex (components: a, c, c', c'', d, e, f and VOA1). The decameric c-ring forms the proton-conducting pore, and is composed of eight proteolipid subunits c, one subunit c' and one subunit c''.

It is found in the vacuole membrane. Its function is as follows. Proton-conducting pore forming subunit of the V0 complex of vacuolar(H+)-ATPase (V-ATPase), a multisubunit enzyme composed of a peripheral complex (V1) that hydrolyzes ATP and a membrane integral complex (V0) that translocates protons. V-ATPase is responsible for acidifying and maintaining the pH of intracellular compartments. This is V-type proton ATPase subunit c'' (VMA16) from Saccharomyces cerevisiae (strain ATCC 204508 / S288c) (Baker's yeast).